A 396-amino-acid chain; its full sequence is Succinyl-diaminopimelate desuccinylase (396 aa).

His74 is a Zn(2+) binding site. Asp76 is an active-site residue. Asp107 contacts Zn(2+). The active-site Proton acceptor is Glu142. 3 residues coordinate Zn(2+): Glu143, Glu171, and His360.

The protein belongs to the peptidase M20A family. DapE subfamily. Homodimer. Requires Zn(2+) as cofactor. Co(2+) serves as cofactor.

The catalysed reaction is N-succinyl-(2S,6S)-2,6-diaminopimelate + H2O = (2S,6S)-2,6-diaminopimelate + succinate. Its pathway is amino-acid biosynthesis; L-lysine biosynthesis via DAP pathway; LL-2,6-diaminopimelate from (S)-tetrahydrodipicolinate (succinylase route): step 3/3. In terms of biological role, catalyzes the hydrolysis of N-succinyl-L,L-diaminopimelic acid (SDAP), forming succinate and LL-2,6-diaminopimelate (DAP), an intermediate involved in the bacterial biosynthesis of lysine and meso-diaminopimelic acid, an essential component of bacterial cell walls. The sequence is that of Succinyl-diaminopimelate desuccinylase from Methylobacterium nodulans (strain LMG 21967 / CNCM I-2342 / ORS 2060).